We begin with the raw amino-acid sequence, 759 residues long: MTEPITPEIVAQHGLKPDEYQRILEHLGRTPTLTELGVFSVMWSEHCSYKSSRVHLKTFPTSGPRVLQGPGENAGVVDLGDGLAAAFKMESHNHPSYIEPYQGAATGVGGILRDVFTMGARPIASLNALRFGDPSHPRTAYLLEGVVAGIGGYGNCMGVPTVGGEVAFHPSYNGNCLVNAFTLGILPADKIFRGTAAGVGNPVMYVGAKTGRDGIHGATMASAEFDASTEEKRPTVQVGDPFMEKLLLEACLELFQTDAVVGIQDMGAAGLTSSSVEMAGRGGNGLDLFLDQVPLREEGMTPYEILLSESQERMLLVAAEGKEELVRSICEKWDLDVAVIGRVTASGRWRAHWRGAVVADLPVDPLTEGAPKYHRPMTPHPALPALHAFDLATLPEPADLGAALVRLLARPTIASKEWVYRQYDHMVRLVGAVRPGGDAAVVRLAVSHDAHAHKGIALSVGVNGRFCFLDPYLGAMHAVAECARNIACVGGEPIAITDCLNFGNPEKPEIMWQFAECVRGIGDACRAFGTPVVSGNVSLYNETEGQGILPTPTVGMVGLVEPVERTCHSTFRDAGDVIALVGSLQGEVGGSEYLSAEHGKEAGRPPALDLAREKAVQETVRRAVRAGLLSSAHDCSEGGLAVALAESCMMHEVPSDGSKPAWIGCAVRIPFPVRKDFVLFGEDASRILVSLPKENAARFVDLAQQCGAPVIRLGAVGGDRLEIQGALSVPVEELARAWRDGIPAVLRRDAAHAGATAPV.

H46 is a catalytic residue. The ATP site is built by Y49 and K88. Residue E90 coordinates Mg(2+). Residues 91 to 94 and R113 contribute to the substrate site; that span reads SHNH. H92 functions as the Proton acceptor in the catalytic mechanism. Position 114 (D114) interacts with Mg(2+). Q237 contributes to the substrate binding site. Residue D265 participates in Mg(2+) binding. 309-311 lines the substrate pocket; that stretch reads ESQ. Residues D498 and G535 each coordinate ATP. Residue N536 coordinates Mg(2+). S538 lines the substrate pocket.

The protein belongs to the FGAMS family. Monomer. Part of the FGAM synthase complex composed of 1 PurL, 1 PurQ and 2 PurS subunits.

It is found in the cytoplasm. It carries out the reaction N(2)-formyl-N(1)-(5-phospho-beta-D-ribosyl)glycinamide + L-glutamine + ATP + H2O = 2-formamido-N(1)-(5-O-phospho-beta-D-ribosyl)acetamidine + L-glutamate + ADP + phosphate + H(+). It functions in the pathway purine metabolism; IMP biosynthesis via de novo pathway; 5-amino-1-(5-phospho-D-ribosyl)imidazole from N(2)-formyl-N(1)-(5-phospho-D-ribosyl)glycinamide: step 1/2. Functionally, part of the phosphoribosylformylglycinamidine synthase complex involved in the purines biosynthetic pathway. Catalyzes the ATP-dependent conversion of formylglycinamide ribonucleotide (FGAR) and glutamine to yield formylglycinamidine ribonucleotide (FGAM) and glutamate. The FGAM synthase complex is composed of three subunits. PurQ produces an ammonia molecule by converting glutamine to glutamate. PurL transfers the ammonia molecule to FGAR to form FGAM in an ATP-dependent manner. PurS interacts with PurQ and PurL and is thought to assist in the transfer of the ammonia molecule from PurQ to PurL. The protein is Phosphoribosylformylglycinamidine synthase subunit PurL of Anaeromyxobacter sp. (strain K).